Consider the following 137-residue polypeptide: Nucleoside diphosphate kinase (137 aa).

ATP is bound by residues K9, F57, R85, T91, R102, and N112. The active-site Pros-phosphohistidine intermediate is H115.

It belongs to the NDK family. Homotetramer. It depends on Mg(2+) as a cofactor.

It is found in the cytoplasm. It catalyses the reaction a 2'-deoxyribonucleoside 5'-diphosphate + ATP = a 2'-deoxyribonucleoside 5'-triphosphate + ADP. The catalysed reaction is a ribonucleoside 5'-diphosphate + ATP = a ribonucleoside 5'-triphosphate + ADP. In terms of biological role, major role in the synthesis of nucleoside triphosphates other than ATP. The ATP gamma phosphate is transferred to the NDP beta phosphate via a ping-pong mechanism, using a phosphorylated active-site intermediate. The chain is Nucleoside diphosphate kinase from Thermus thermophilus (strain ATCC BAA-163 / DSM 7039 / HB27).